The chain runs to 75 residues: uncharacterized protein (75 aa).

This is an uncharacterized protein from Equus caballus (Horse).